The sequence spans 671 residues: Carbohydrate acetyl esterase/feruloyl esterase (671 aa).

The first 24 residues, Met-1–Ala-24, serve as a signal peptide directing secretion. Positions Met-1 to Gly-296 are carbohydrate acetyl esterase. Active-site for acetyl esterase activity residues include Ser-55, Asp-271, and His-274. The segment at Tyr-297–Lys-671 is feruloyl esterase.

It in the N-terminal section; belongs to the carbohydrate esterase 6 family.

It catalyses the reaction feruloyl-polysaccharide + H2O = ferulate + polysaccharide.. The protein operates within glycan degradation; xylan degradation. Functionally, involved in degradation of plant cell wall polysaccharides. Bifunctional esterase that possesses both acetyl esterase and ferulic acid esterase activities. Has deacetylase activity towards acetylated xylo-oligosaccharides smaller than xylo-heptaose, as well as from glucose-pentaacetate. Is also able to release ferulic acid from methylferulate, and from the more natural substrates wheat bran, corn fiber, and XOS(FA,Ac), a corn fiber-derived substrate enriched in O-acetyl and ferulic acid esters. This Xylanibacter ruminicola (strain ATCC 19189 / DSM 19721 / CIP 105475 / JCM 8958 / 23) (Prevotella ruminicola) protein is Carbohydrate acetyl esterase/feruloyl esterase.